A 324-amino-acid chain; its full sequence is Chlorophyllase-1 (324 aa).

A GXSXG motif is present at residues 136-140; sequence GHSRG. Catalysis depends on serine 138, which acts as the Nucleophile. Active-site charge relay system residues include aspartate 168 and histidine 243.

The protein belongs to the AB hydrolase superfamily. Lipase family. In terms of tissue distribution, expressed in seedlings, leaves, flowers and siliques, but not in roots.

It is found in the cytoplasm. It localises to the cytosol. It catalyses the reaction a chlorophyll + H2O = a chlorophyllide + phytol + H(+). The enzyme catalyses chlorophyll a + H2O = phytol + chlorophyllide a + H(+). Its pathway is porphyrin-containing compound metabolism; chlorophyll degradation. In terms of biological role, catalyzes the hydrolysis of ester bond in chlorophyll to yield chlorophyllide and phytol. Shows a preferential activity toward chlorophyll a. Does not seem to be required for chlorophyll degradation during senescence. May modulate the balance between different plant defense pathways. This is Chlorophyllase-1 from Arabidopsis thaliana (Mouse-ear cress).